A 235-amino-acid chain; its full sequence is Phosphoribosylaminoimidazole-succinocarboxamide synthase (235 aa).

It belongs to the SAICAR synthetase family.

It carries out the reaction 5-amino-1-(5-phospho-D-ribosyl)imidazole-4-carboxylate + L-aspartate + ATP = (2S)-2-[5-amino-1-(5-phospho-beta-D-ribosyl)imidazole-4-carboxamido]succinate + ADP + phosphate + 2 H(+). The protein operates within purine metabolism; IMP biosynthesis via de novo pathway; 5-amino-1-(5-phospho-D-ribosyl)imidazole-4-carboxamide from 5-amino-1-(5-phospho-D-ribosyl)imidazole-4-carboxylate: step 1/2. In Clostridium acetobutylicum (strain ATCC 824 / DSM 792 / JCM 1419 / IAM 19013 / LMG 5710 / NBRC 13948 / NRRL B-527 / VKM B-1787 / 2291 / W), this protein is Phosphoribosylaminoimidazole-succinocarboxamide synthase.